Consider the following 455-residue polypeptide: Argininosuccinate lyase (455 aa).

This sequence belongs to the lyase 1 family. Argininosuccinate lyase subfamily.

It is found in the cytoplasm. The enzyme catalyses 2-(N(omega)-L-arginino)succinate = fumarate + L-arginine. It participates in amino-acid biosynthesis; L-arginine biosynthesis; L-arginine from L-ornithine and carbamoyl phosphate: step 3/3. This is Argininosuccinate lyase from Shewanella sp. (strain MR-4).